Reading from the N-terminus, the 189-residue chain is Small ribosomal subunit protein uS5 (189 aa).

In terms of domain architecture, S5 DRBM spans 22–85 (FVDKLVAINR…EAAKRELIFV (64 aa)).

Belongs to the universal ribosomal protein uS5 family. Part of the 30S ribosomal subunit. Contacts proteins S4 and S8.

In terms of biological role, with S4 and S12 plays an important role in translational accuracy. Its function is as follows. Located at the back of the 30S subunit body where it stabilizes the conformation of the head with respect to the body. The polypeptide is Small ribosomal subunit protein uS5 (Rhizobium etli (strain CIAT 652)).